Consider the following 345-residue polypeptide: uncharacterized protein (345 aa).

A compositionally biased stretch (polar residues) spans 1–13; that stretch reads MSKPNTETISVNI. Residues 1–23 form a disordered region; sequence MSKPNTETISVNIPESEGVPLPD. A coiled-coil region spans residues 283 to 316; that stretch reads SLKQRTNILKKQGETLKKNVEDINKDTSNLKRHA.

The protein resides in the virion. This is an uncharacterized protein from Acanthamoeba polyphaga mimivirus (APMV).